A 176-amino-acid polypeptide reads, in one-letter code: Ribosome maturation factor RimM (176 aa).

The PRC barrel domain maps to 96–176; it reads PEDEFYWRDL…QILVDWDPDF (81 aa).

Belongs to the RimM family. Binds ribosomal protein uS19.

The protein resides in the cytoplasm. In terms of biological role, an accessory protein needed during the final step in the assembly of 30S ribosomal subunit, possibly for assembly of the head region. Essential for efficient processing of 16S rRNA. May be needed both before and after RbfA during the maturation of 16S rRNA. It has affinity for free ribosomal 30S subunits but not for 70S ribosomes. This Shewanella woodyi (strain ATCC 51908 / MS32) protein is Ribosome maturation factor RimM.